The sequence spans 253 residues: Hydroxyacylglutathione hydrolase (253 aa).

Zn(2+)-binding residues include His54, His56, Asp58, His59, His112, Asp131, and His169.

It belongs to the metallo-beta-lactamase superfamily. Glyoxalase II family. Monomer. It depends on Zn(2+) as a cofactor.

The enzyme catalyses an S-(2-hydroxyacyl)glutathione + H2O = a 2-hydroxy carboxylate + glutathione + H(+). It functions in the pathway secondary metabolite metabolism; methylglyoxal degradation; (R)-lactate from methylglyoxal: step 2/2. Functionally, thiolesterase that catalyzes the hydrolysis of S-D-lactoyl-glutathione to form glutathione and D-lactic acid. The polypeptide is Hydroxyacylglutathione hydrolase (Bartonella quintana (strain Toulouse) (Rochalimaea quintana)).